A 563-amino-acid polypeptide reads, in one-letter code: uncharacterized protein (563 aa).

The segment at residues 19–45 (CLICRRRKVKCDRQQPCSRCKERNEVC) is a DNA-binding region (zn(2)-C6 fungal-type). The interval 56–78 (NVGPHPSHSENASDSETTLEVSP) is disordered. Over residues 64 to 75 (SENASDSETTLE) the composition is skewed to polar residues.

The protein localises to the nucleus. This is an uncharacterized protein from Schizosaccharomyces pombe (strain 972 / ATCC 24843) (Fission yeast).